Reading from the N-terminus, the 436-residue chain is MEIVVIGAGLAGVEAANVISKFGIKVKLFEMKPKKFSPAHKIDNFAELVCSNSLKSKLLTNASGLLKEEMKVFGSLVMEAAEATSVEAGQALAVDRYKFSEYITQRIKHNGLISIIHEEVTEVPRDKVVVVSTGPLTTESLLSDISKLCNSKNLYFFDAAAPIVLKDSIDFSKAFFASRYNKGSNDYINCPMTKEEYERFYWELVNAEVIEVKDFEKDLLFEGCMPIEEMARRGIDTMRYGPLKPVGIIDPRTGKMPYAVVQLRKDTQDGKLYNMVGFQTRLKWSEQKRVFRLIPGLENAEFVRYGVMHKNSYINSPEVLTKYLFLKKYPNIFFAGQITGVEGYLESASTGIIAGINAARQILGKEPISLPPNTCIGALIEYITTPKKDFQPMNANYGIISIDDEISKIKDKEKRKLLIAQKSLNICRELANKIFE.

7–12 (GAGLAG) lines the FAD pocket.

This sequence belongs to the MnmG family. TrmFO subfamily. It depends on FAD as a cofactor.

It localises to the cytoplasm. The catalysed reaction is uridine(54) in tRNA + (6R)-5,10-methylene-5,6,7,8-tetrahydrofolate + NADH + H(+) = 5-methyluridine(54) in tRNA + (6S)-5,6,7,8-tetrahydrofolate + NAD(+). It catalyses the reaction uridine(54) in tRNA + (6R)-5,10-methylene-5,6,7,8-tetrahydrofolate + NADPH + H(+) = 5-methyluridine(54) in tRNA + (6S)-5,6,7,8-tetrahydrofolate + NADP(+). Its function is as follows. Catalyzes the folate-dependent formation of 5-methyl-uridine at position 54 (M-5-U54) in all tRNAs. In Caldicellulosiruptor bescii (strain ATCC BAA-1888 / DSM 6725 / KCTC 15123 / Z-1320) (Anaerocellum thermophilum), this protein is Methylenetetrahydrofolate--tRNA-(uracil-5-)-methyltransferase TrmFO.